The sequence spans 235 residues: Small ribosomal subunit protein uS2c (235 aa).

Belongs to the universal ribosomal protein uS2 family.

Its subcellular location is the plastid. The chain is Small ribosomal subunit protein uS2c (rps2) from Euglena longa (Euglenophycean alga).